Reading from the N-terminus, the 683-residue chain is THO complex subunit 5 homolog (683 aa).

The interval 1-42 (MSSESSKKRKPKVIRSDGTPTEGKRNRSDTEQEGKYYSEEAE) is disordered. Serine 2 is modified (N-acetylserine). An interaction with CSF1R region spans residues 2–144 (SSESSKKRKP…YEVMHLQKEI (143 aa)). Residues 2 to 199 (SSESSKKRKP…RLDWELEQRK (198 aa)) are interaction with THOC7. Phosphoserine occurs at positions 5 and 6. The Nuclear localization signal motif lies at 7-10 (KKRK). Basic and acidic residues predominate over residues 22–42 (EGKRNRSDTEQEGKYYSEEAE). Residues 81–247 (AIEIEERRIQ…QASLPVQEYL (167 aa)) adopt a coiled-coil conformation. Lysine 153 participates in a covalent cross-link: Glycyl lysine isopeptide (Lys-Gly) (interchain with G-Cter in SUMO2). Position 225 is a phosphotyrosine (tyrosine 225). The tract at residues 247 to 683 (LFMPFDQAHK…NHPQGFFSHR (437 aa)) is tandem RWD domains. A disordered region spans residues 301 to 336 (FKPPEDSQDDESDSDAEEEQTTKRRRPTLGVQLDDK). The span at 306-319 (DSQDDESDSDAEEE) shows a compositional bias: acidic residues. Residues serine 307, serine 312, and serine 314 each carry the phosphoserine modification. A Phosphothreonine modification is found at threonine 328.

Belongs to the THOC5 family. In terms of assembly, component of the THO subcomplex, which is composed of THOC1, THOC2, THOC3, THOC5, THOC6 and THOC7. The THO subcomplex interacts with DDX39B to form the THO-DDX39B complex which multimerizes into a 28-subunit tetrameric assembly. Component of the transcription/export (TREX) complex at least composed of ALYREF/THOC4, DDX39B, SARNP/CIP29, CHTOP and the THO subcomplex; in the complex interacts with THOC1, THOC2, THOC5, THOC6 and THOC7; forms a coiled-coil dimer with THOC7; together with THOC6 and THOC7, plays a key structural role in the oligomerization of the THO-DDX39B complex. TREX seems to have a dynamic structure involving ATP-dependent remodeling. Interacts (via N-terminus) with the NTF2 domain of NXF1. Interacts with phosphorylated CSF1R. Forms a complex with CEBPB. Interacts with CPSF6; indicative for an association with the cleavage factor Im (CFIm) complex. Interacts with THOC1. Interacts with LUZP4. Interacts with NCBP3. Phosphorylated on tyrosine upon binding to activated CSF1R; which causes a dissociation of the two proteins. Phosphorylation on Ser-5 and/or Ser-6 is required for nuclear export. Phosphorylated on Thr-328 in insulin-stimulated adipocytes. As to expression, ubiquitously expressed, with highest levels in testis, liver and heart.

The protein resides in the nucleus. Its subcellular location is the cytoplasm. Its function is as follows. Component of the THO subcomplex of the TREX complex which is thought to couple mRNA transcription, processing and nuclear export, and which specifically associates with spliced mRNA and not with unspliced pre-mRNA. Plays a key structural role in the oligomerization of the THO-DDX39B complex. TREX is recruited to spliced mRNAs by a transcription-independent mechanism, binds to mRNA upstream of the exon-junction complex (EJC) and is recruited in a splicing- and cap-dependent manner to a region near the 5' end of the mRNA where it functions in mRNA export to the cytoplasm via the TAP/NXF1 pathway. THOC5 in conjunction with ALYREF/THOC4 functions in NXF1-NXT1 mediated nuclear export of HSP70 mRNA; both proteins enhance the RNA binding activity of NXF1 and are required for NXF1 localization to the nuclear rim. Involved in transcription elongation and genome stability. Involved in alternative polyadenylation site choice by recruiting CPSF6 to 5' region of target genes; probably mediates association of the TREX and CFIm complexes. Regulates the expression of myeloid transcription factors CEBPA, CEBPB and GAB2 by enhancing the levels of phosphatidylinositol 3,4,5-trisphosphate. May be involved in the differentiation of granulocytes and adipocytes. Essential for hematopoietic primitive cell survival and plays an integral role in monocytic development. The chain is THO complex subunit 5 homolog (Thoc5) from Mus musculus (Mouse).